We begin with the raw amino-acid sequence, 382 residues long: Galactokinase (382 aa).

Position 34–37 (34–37 (EHTD)) interacts with substrate. 124–130 (GAGLSSS) contributes to the ATP binding site. Residues Ser-130 and Glu-162 each coordinate Mg(2+). Asp-174 serves as the catalytic Proton acceptor. Tyr-223 is a binding site for substrate.

This sequence belongs to the GHMP kinase family. GalK subfamily.

It is found in the cytoplasm. It carries out the reaction alpha-D-galactose + ATP = alpha-D-galactose 1-phosphate + ADP + H(+). The protein operates within carbohydrate metabolism; galactose metabolism. Functionally, catalyzes the transfer of the gamma-phosphate of ATP to D-galactose to form alpha-D-galactose-1-phosphate (Gal-1-P). The polypeptide is Galactokinase (Cronobacter sakazakii (strain ATCC BAA-894) (Enterobacter sakazakii)).